The primary structure comprises 268 residues: MERYESLFAQLKERKEGAFVPFVTLGDPGIEQSLKIIDTLIEAGADALELGIPFSDPLADGPTIQNATLRAFAAGVTPAQCFEMLALIRQKHPTIPIGLLMYANLVFNKGIDEFYAQCEKVGVDSVLVADVPVEESAPFRQAALRHNVAPIFICPPNADDDLLRQIASYGRGYTYLLSRAGVTGAENRAALPLNHLVAKLKEYNAAPPLQGFGISAPDQVKAAIDAGAAGAISGSAIVKIIEQHINEPEKMLVALKVFVQPMKAATRS.

Residues glutamate 49 and aspartate 60 each act as proton acceptor in the active site.

Belongs to the TrpA family. In terms of assembly, tetramer of two alpha and two beta chains.

The catalysed reaction is (1S,2R)-1-C-(indol-3-yl)glycerol 3-phosphate + L-serine = D-glyceraldehyde 3-phosphate + L-tryptophan + H2O. It functions in the pathway amino-acid biosynthesis; L-tryptophan biosynthesis; L-tryptophan from chorismate: step 5/5. In terms of biological role, the alpha subunit is responsible for the aldol cleavage of indoleglycerol phosphate to indole and glyceraldehyde 3-phosphate. In Escherichia coli (strain 55989 / EAEC), this protein is Tryptophan synthase alpha chain.